The primary structure comprises 152 residues: Small ribosomal subunit protein uS8m (152 aa).

This sequence belongs to the universal ribosomal protein uS8 family.

It is found in the mitochondrion. The sequence is that of Small ribosomal subunit protein uS8m (RPS8) from Marchantia polymorpha (Common liverwort).